Here is a 368-residue protein sequence, read N- to C-terminus: 3-isopropylmalate dehydrogenase (368 aa).

NAD(+) is bound at residue 80–93 (GPKWDNLEFSKKPE). The substrate site is built by Arg100, Arg110, Arg138, and Asp229. The Mg(2+) site is built by Asp229, Asp253, and Asp257. 292–304 (GSAPDIAGKEIAN) is a binding site for NAD(+).

Belongs to the isocitrate and isopropylmalate dehydrogenases family. LeuB type 1 subfamily. In terms of assembly, homodimer. Requires Mg(2+) as cofactor. It depends on Mn(2+) as a cofactor.

It localises to the cytoplasm. The catalysed reaction is (2R,3S)-3-isopropylmalate + NAD(+) = 4-methyl-2-oxopentanoate + CO2 + NADH. Its pathway is amino-acid biosynthesis; L-leucine biosynthesis; L-leucine from 3-methyl-2-oxobutanoate: step 3/4. Functionally, catalyzes the oxidation of 3-carboxy-2-hydroxy-4-methylpentanoate (3-isopropylmalate) to 3-carboxy-4-methyl-2-oxopentanoate. The product decarboxylates to 4-methyl-2 oxopentanoate. This is 3-isopropylmalate dehydrogenase from Pelagibacter ubique (strain HTCC1062).